A 101-amino-acid polypeptide reads, in one-letter code: Large ribosomal subunit protein uL24 (101 aa).

The protein belongs to the universal ribosomal protein uL24 family. In terms of assembly, part of the 50S ribosomal subunit.

Functionally, one of two assembly initiator proteins, it binds directly to the 5'-end of the 23S rRNA, where it nucleates assembly of the 50S subunit. Its function is as follows. One of the proteins that surrounds the polypeptide exit tunnel on the outside of the subunit. The sequence is that of Large ribosomal subunit protein uL24 from Borreliella burgdorferi (strain ATCC 35210 / DSM 4680 / CIP 102532 / B31) (Borrelia burgdorferi).